The primary structure comprises 671 residues: MESIEQQLTELRTTLRHHEYLYHVMDAPEIPDAEYDRLMRELCELETKHPELITPDSPTQRVGAAPLAAFSQIRHEVPMLSLDNVFDEESFLAFNKRVQDRLKNNEKVTWCCELKLDGLAVSILYENGVLVSAATRGDGTTGEDITSNVRTIRAIPLKLHGENIPARLEVRGEVFLPQAGFEKINEDARRTGGKVFANPRNAAAGSLRQLDPRITAKRPLTFFCYGVGVLEGGELPDTHLGRLLQFKKWGVPVSDRVTLCESAEEVLAFYHKVEEDRPTLGFDIDGVVIKVNSLEQQEQLGFVARAPRWAVAFKFPAQEQMTFVRDVEFQVGRTGAITPVARLEPVHVAGVLVSNATLHNADEIERLGLRIGDKVVIRRAGDVIPQVVNVVLSERPEDTREVVFPTHCPVCGSDVERVEGEAVARCTGGLICGAQRKESLKHFVSRRAMDVDGMGDKIIDQLVEKEYVHTPADLFKLTAGKLTGLERMGPKLAQNVVNALEKAKETTFARFLYALGIREVGEATAAGLAAYFGTLEALEAASIEELQKVPDVGIVVASHVHNFFAEESNRNVISELLAEGVHWPAPIVINAEEIDSPFAGKTVVLTGSLSQMSRDDAKARLVELGAKVAGSVSKKTDLVIAGEAAGSKLAKAQELGIEVIDEAEMLRLLGS.

Residues 32 to 36 (DAEYD), 81 to 82 (SL), and glutamate 113 each bind NAD(+). Residue lysine 115 is the N6-AMP-lysine intermediate of the active site. NAD(+)-binding residues include arginine 136, glutamate 173, lysine 290, and lysine 314. 4 residues coordinate Zn(2+): cysteine 408, cysteine 411, cysteine 426, and cysteine 432. Residues 593 to 671 (EIDSPFAGKT…EAEMLRLLGS (79 aa)) form the BRCT domain.

It belongs to the NAD-dependent DNA ligase family. LigA subfamily. It depends on Mg(2+) as a cofactor. Mn(2+) is required as a cofactor.

It catalyses the reaction NAD(+) + (deoxyribonucleotide)n-3'-hydroxyl + 5'-phospho-(deoxyribonucleotide)m = (deoxyribonucleotide)n+m + AMP + beta-nicotinamide D-nucleotide.. Its function is as follows. DNA ligase that catalyzes the formation of phosphodiester linkages between 5'-phosphoryl and 3'-hydroxyl groups in double-stranded DNA using NAD as a coenzyme and as the energy source for the reaction. It is essential for DNA replication and repair of damaged DNA. In Shigella boydii serotype 4 (strain Sb227), this protein is DNA ligase.